A 283-amino-acid polypeptide reads, in one-letter code: Probable endonuclease 4 (283 aa).

Residues H67, H107, E144, D178, H181, H215, D228, H230, and E260 each contribute to the Zn(2+) site.

The protein belongs to the AP endonuclease 2 family. It depends on Zn(2+) as a cofactor.

It catalyses the reaction Endonucleolytic cleavage to 5'-phosphooligonucleotide end-products.. Endonuclease IV plays a role in DNA repair. It cleaves phosphodiester bonds at apurinic or apyrimidinic (AP) sites, generating a 3'-hydroxyl group and a 5'-terminal sugar phosphate. The chain is Probable endonuclease 4 from Geobacter sp. (strain M21).